A 302-amino-acid chain; its full sequence is Phosphoribosylaminoimidazole-succinocarboxamide synthase (302 aa).

This sequence belongs to the SAICAR synthetase family.

The enzyme catalyses 5-amino-1-(5-phospho-D-ribosyl)imidazole-4-carboxylate + L-aspartate + ATP = (2S)-2-[5-amino-1-(5-phospho-beta-D-ribosyl)imidazole-4-carboxamido]succinate + ADP + phosphate + 2 H(+). It functions in the pathway purine metabolism; IMP biosynthesis via de novo pathway; 5-amino-1-(5-phospho-D-ribosyl)imidazole-4-carboxamide from 5-amino-1-(5-phospho-D-ribosyl)imidazole-4-carboxylate: step 1/2. The sequence is that of Phosphoribosylaminoimidazole-succinocarboxamide synthase from Cupriavidus necator (strain ATCC 17699 / DSM 428 / KCTC 22496 / NCIMB 10442 / H16 / Stanier 337) (Ralstonia eutropha).